The primary structure comprises 785 residues: Endonuclease MutS2 (785 aa).

G332–T339 is an ATP binding site. Residues I710–K785 enclose the Smr domain.

Belongs to the DNA mismatch repair MutS family. MutS2 subfamily. Homodimer. Binds to stalled ribosomes, contacting rRNA.

Endonuclease that is involved in the suppression of homologous recombination and thus may have a key role in the control of bacterial genetic diversity. In terms of biological role, acts as a ribosome collision sensor, splitting the ribosome into its 2 subunits. Detects stalled/collided 70S ribosomes which it binds and splits by an ATP-hydrolysis driven conformational change. Acts upstream of the ribosome quality control system (RQC), a ribosome-associated complex that mediates the extraction of incompletely synthesized nascent chains from stalled ribosomes and their subsequent degradation. Probably generates substrates for RQC. This Clostridium botulinum (strain Alaska E43 / Type E3) protein is Endonuclease MutS2.